The following is a 539-amino-acid chain: Phosphoenolpyruvate carboxykinase (ATP) (539 aa).

Substrate-binding residues include arginine 61, tyrosine 195, and lysine 201. ATP contacts are provided by residues lysine 201, histidine 220, and 238-246; that span reads GLSGTGKTT. The Mn(2+) site is built by lysine 201 and histidine 220. Aspartate 259 lines the Mn(2+) pocket. ATP contacts are provided by glutamate 287, arginine 325, and threonine 450. Arginine 325 serves as a coordination point for substrate.

It belongs to the phosphoenolpyruvate carboxykinase (ATP) family. Mn(2+) serves as cofactor.

Its subcellular location is the cytoplasm. It carries out the reaction oxaloacetate + ATP = phosphoenolpyruvate + ADP + CO2. It participates in carbohydrate biosynthesis; gluconeogenesis. In terms of biological role, involved in the gluconeogenesis. Catalyzes the conversion of oxaloacetate (OAA) to phosphoenolpyruvate (PEP) through direct phosphoryl transfer between the nucleoside triphosphate and OAA. In Methylorubrum extorquens (strain CM4 / NCIMB 13688) (Methylobacterium extorquens), this protein is Phosphoenolpyruvate carboxykinase (ATP).